Reading from the N-terminus, the 532-residue chain is Probable calcium-binding mitochondrial carrier CBG00135 (532 aa).

EF-hand domains follow at residues 70-105, 107-136, 137-172, and 173-208; these read EKEK…QTPH, PATM…NYVI, AHEA…MGVN, and LDDH…YPST. Ca(2+)-binding residues include Asp83, Asp85, Asp87, Ser89, and Asp94. The Ca(2+) site is built by Asp150, Asn152, Asp154, Glu156, and Glu161. Solcar repeat units follow at residues 243–329, 339–425, and 436–526; these read GVWW…IKRW, LTTY…LKSC, and PGVL…VRKQ. The next 6 helical transmembrane spans lie at 249–266, 304–323, 349–362, 400–419, 442–459, and 501–518; these read LVAG…TAPF, GNGI…FMSY, SSAG…IYPM, GYLP…LTVY, LACG…SYPL, and GITP…ISYV.

Belongs to the mitochondrial carrier (TC 2.A.29) family.

Its subcellular location is the mitochondrion inner membrane. Functionally, calcium-dependent mitochondrial solute carrier. This Caenorhabditis briggsae protein is Probable calcium-binding mitochondrial carrier CBG00135.